Reading from the N-terminus, the 570-residue chain is Periplasmic trehalase (570 aa).

Residues 1-34 form the signal peptide; it reads MIPPEIRRSVLLQKAIKLALAGTLLTFASFSATA. Residues arginine 159, 166-167, asparagine 203, 212-214, 284-286, and glycine 317 contribute to the substrate site; these read WD, RSQ, and RPE. Active-site proton donor/acceptor residues include aspartate 319 and glutamate 503. Position 518 (glutamate 518) interacts with substrate. Residues 544–570 are disordered; sequence KPCDSVPSTRPASLSATPTKTPSAATQ. A compositionally biased stretch (low complexity) spans 554–570; the sequence is PASLSATPTKTPSAATQ.

Belongs to the glycosyl hydrolase 37 family. In terms of assembly, monomer.

The protein localises to the periplasm. It carries out the reaction alpha,alpha-trehalose + H2O = alpha-D-glucose + beta-D-glucose. In terms of biological role, provides the cells with the ability to utilize trehalose at high osmolarity by splitting it into glucose molecules that can subsequently be taken up by the phosphotransferase-mediated uptake system. The sequence is that of Periplasmic trehalase from Salmonella choleraesuis (strain SC-B67).